We begin with the raw amino-acid sequence, 525 residues long: uncharacterized protein (525 aa).

Position 55 is a phosphoserine (S55). Helical transmembrane passes span 81-101, 120-140, 147-167, 173-193, 208-228, 238-258, 295-315, 318-338, 350-370, 388-408, 413-433, 454-474, and 484-504; these read AYIVLLSTSLQMYVFWTPNFY, LLGQSMFVLGVALGPLFLGPL, KLVYIGSLIIYVCFCISCALA, LVISMLIMGVVGSTALGNVAG, MYMFIFMCSVASVGSPMGTGV, WLYWIDVIVGGFFIILFVFTP, FVFFMAIKIFFSEPIVSSLGI, GFVNGLLYFFLQAIWPVYFSI, YMAAMPACVILLWFEPLQCWL, FIMTLFYVWGFPIGIFMFAFC, IHYIVSLIGLTIFNIADYHIW, AFELPSNLGAVGFIHLSALMF, and AVVGFASLPLIALIYALYFYG.

This sequence belongs to the major facilitator superfamily. CAR1 family.

Its subcellular location is the membrane. This is an uncharacterized protein from Schizosaccharomyces pombe (strain 972 / ATCC 24843) (Fission yeast).